A 269-amino-acid polypeptide reads, in one-letter code: 3-methyl-2-oxobutanoate hydroxymethyltransferase (269 aa).

Residues aspartate 50 and aspartate 89 each coordinate Mg(2+). 3-methyl-2-oxobutanoate is bound by residues 50–51 (DS), aspartate 89, and lysine 119. Mg(2+) is bound at residue glutamate 121. Glutamate 187 functions as the Proton acceptor in the catalytic mechanism.

It belongs to the PanB family. In terms of assembly, homodecamer; pentamer of dimers. Requires Mg(2+) as cofactor.

Its subcellular location is the cytoplasm. The enzyme catalyses 3-methyl-2-oxobutanoate + (6R)-5,10-methylene-5,6,7,8-tetrahydrofolate + H2O = 2-dehydropantoate + (6S)-5,6,7,8-tetrahydrofolate. It functions in the pathway cofactor biosynthesis; (R)-pantothenate biosynthesis; (R)-pantoate from 3-methyl-2-oxobutanoate: step 1/2. Catalyzes the reversible reaction in which hydroxymethyl group from 5,10-methylenetetrahydrofolate is transferred onto alpha-ketoisovalerate to form ketopantoate. This chain is 3-methyl-2-oxobutanoate hydroxymethyltransferase, found in Corynebacterium efficiens (strain DSM 44549 / YS-314 / AJ 12310 / JCM 11189 / NBRC 100395).